The chain runs to 158 residues: Eukaryotic translation initiation factor 5A-3 (158 aa).

Residues Met1–Ser10 are compositionally biased toward basic and acidic residues. The interval Met1–Ala23 is disordered. Residue Ser2 is modified to Phosphoserine. The residue at position 51 (Lys51) is a Hypusine.

The protein belongs to the eIF-5A family. Lys-52 undergoes hypusination, a unique post-translational modification that consists in the addition of a butylamino group from spermidine to lysine side chain, leading to the formation of the unusual amino acid hypusine. eIF-5As are the only known proteins to undergo this modification, which is essential for their function. As to expression, expressed in the vascular tissues of roots, stems and leaves. Localized in phloem companion cells rather than sieve-tube members. Not expressed in xylem or procambium. Detected in root tips and in the chalazal tissue of fertilized ovules.

Functionally, translation factor that promotes translation elongation and termination, particularly upon ribosome stalling at specific amino acid sequence contexts. Binds between the exit (E) and peptidyl (P) site of the ribosome and promotes rescue of stalled ribosome: specifically required for efficient translation of polyproline-containing peptides as well as other motifs that stall the ribosome. Acts as a ribosome quality control (RQC) cofactor by joining the RQC complex to facilitate peptidyl transfer during CAT tailing step. Involved in supporting growth and plays a regulatory role in the response to sub-lethal osmotic and nutrient stress. The protein is Eukaryotic translation initiation factor 5A-3 (ELF5A-3) of Arabidopsis thaliana (Mouse-ear cress).